A 440-amino-acid chain; its full sequence is NADH-quinone oxidoreductase subunit D (440 aa).

The protein belongs to the complex I 49 kDa subunit family. In terms of assembly, NDH-1 is composed of 14 different subunits. Subunits NuoB, C, D, E, F, and G constitute the peripheral sector of the complex.

Its subcellular location is the cell membrane. It carries out the reaction a quinone + NADH + 5 H(+)(in) = a quinol + NAD(+) + 4 H(+)(out). In terms of biological role, NDH-1 shuttles electrons from NADH, via FMN and iron-sulfur (Fe-S) centers, to quinones in the respiratory chain. The immediate electron acceptor for the enzyme in this species is believed to be a menaquinone. Couples the redox reaction to proton translocation (for every two electrons transferred, four hydrogen ions are translocated across the cytoplasmic membrane), and thus conserves the redox energy in a proton gradient. This chain is NADH-quinone oxidoreductase subunit D, found in Mycobacterium bovis (strain ATCC BAA-935 / AF2122/97).